A 329-amino-acid chain; its full sequence is Protein-arginine N-acetylglucosaminyltransferase NleB (329 aa).

Arginine 13 carries an N-beta-linked (GlcNAc) arginine; by autocatalysis glycan. 48 to 50 (QWF) serves as a coordination point for UDP-N-acetyl-alpha-D-glucosamine. Residue arginine 53 is glycosylated (N-beta-linked (GlcNAc) arginine; by autocatalysis). Residue tyrosine 72 participates in UDP-N-acetyl-alpha-D-glucosamine binding. Arginine 159 is a glycosylation site (N-beta-linked (GlcNAc) arginine; by autocatalysis). Residue 219-222 (YLDA) coordinates UDP-N-acetyl-alpha-D-glucosamine. The DXD motif motif lies at 221–223 (DAD). Aspartate 223 lines the Mn(2+) pocket. The active-site Proton acceptor is glutamate 253. Arginine 293 carries an N-beta-linked (GlcNAc) arginine; by autocatalysis glycan. Residues asparagine 320 and serine 322 each coordinate Mn(2+). UDP-N-acetyl-alpha-D-glucosamine is bound by residues serine 322 and 327 to 329 (SSW).

This sequence belongs to the glycosyltransferase NleB family. Mn(2+) serves as cofactor. Auto-glycosylated: arginine GlcNAcylation is required for activity toward death domain-containing host target proteins.

Its subcellular location is the secreted. It localises to the host cell. It carries out the reaction L-arginyl-[protein] + UDP-N-acetyl-alpha-D-glucosamine = N(omega)-(N-acetyl-beta-D-glucosaminyl)-L-arginyl-[protein] + UDP + H(+). Its function is as follows. Protein-arginine N-acetylglucosaminyltransferase effector that disrupts TNF signaling in infected cells, including NF-kappa-B signaling, apoptosis and necroptosis. Acts by catalyzing the transfer of a single N-acetylglucosamine (GlcNAc) to a conserved arginine residue in the death domain of host proteins FADD, TNFRSF1A and RIPK1: arginine GlcNAcylation prevents homotypic/heterotypic death domain interactions and assembly of the oligomeric TNF-alpha receptor complex, thereby disrupting TNF signaling. Has preference for host FADD as substrate compared to TNFRSF1A and RIPK1. Also acts on host proteins without a death domain: catalyzes GlcNAcylation of host GAPDH protein, thereby preventing GAPDH interaction with TRAF2 and TRAF3, leading to inhibit NF-kappa-B signaling and type I interferon production, respectively. Also displays intra-bacterial activity by mediating GlcNAcylation of glutathione synthetase GshB. Catalyzes auto-GlcNAcylation, which is required for activity toward death domain-containing host target proteins. The polypeptide is Protein-arginine N-acetylglucosaminyltransferase NleB (Citrobacter rodentium).